The following is a 267-amino-acid chain: Very long chain fatty acid elongase 6 (267 aa).

N-linked (GlcNAc...) asparagine glycosylation is present at Asn-2. A run of 7 helical transmembrane segments spans residues 34-51 (FLFSALYAAFIFGGRHLM), 70-90 (LAVFSIFGALRTGAYMLYILM), 111-131 (FWAYAFVLSKAPELGDTIFII), 136-156 (KLIFLHWYHHITVLLYSWYSY), 159-179 (MVAGGGWFMTMNYGVHAVMYS), 197-217 (FITLSQITQMLMGCVINYLVF), and 234-254 (IFWSSLMYLSYLLLFCHFFFE).

This sequence belongs to the ELO family. ELOVL6 subfamily. In terms of processing, N-Glycosylated. As to expression, expressed in liver and barely in brain.

The protein localises to the endoplasmic reticulum membrane. It carries out the reaction a very-long-chain acyl-CoA + malonyl-CoA + H(+) = a very-long-chain 3-oxoacyl-CoA + CO2 + CoA. The enzyme catalyses hexadecanoyl-CoA + malonyl-CoA + H(+) = 3-oxooctadecanoyl-CoA + CO2 + CoA. The catalysed reaction is (9Z)-hexadecenoyl-CoA + malonyl-CoA + H(+) = 3-oxo-(11Z)-octadecenoyl-CoA + CO2 + CoA. It catalyses the reaction dodecanoyl-CoA + malonyl-CoA + H(+) = 3-oxotetradecanoyl-CoA + CO2 + CoA. It carries out the reaction tetradecanoyl-CoA + malonyl-CoA + H(+) = 3-oxohexadecanoyl-CoA + CO2 + CoA. The enzyme catalyses (9Z)-octadecenoyl-CoA + malonyl-CoA + H(+) = 3-oxo-(11Z)-eicosenoyl-CoA + CO2 + CoA. The catalysed reaction is (9Z,12Z)-octadecadienoyl-CoA + malonyl-CoA + H(+) = (11Z,14Z)-3-oxoicosa-11,14-dienoyl-CoA + CO2 + CoA. It catalyses the reaction (9Z,12Z,15Z)-octadecatrienoyl-CoA + malonyl-CoA + H(+) = (11Z,14Z,17Z)-3-oxoeicosatrienoyl-CoA + CO2 + CoA. It functions in the pathway lipid metabolism; fatty acid biosynthesis. Its activity is regulated as follows. The reaction is stimulated by the presence of HSD17B12, the enzyme catalyzing the second step of the elongation cycle. Its function is as follows. Catalyzes the first and rate-limiting reaction of the four reactions that constitute the long-chain fatty acids elongation cycle. This endoplasmic reticulum-bound enzymatic process allows the addition of 2 carbons to the chain of long- and very long-chain fatty acids (VLCFAs) per cycle. Condensing enzyme that elongates fatty acids with 12, 14 and 16 carbons with higher activity toward C16:0 acyl-CoAs. Catalyzes the synthesis of unsaturated C16 long chain fatty acids and, to a lesser extent, C18:0 and those with low desaturation degree. May participate in the production of saturated and monounsaturated VLCFAs of different chain lengths that are involved in multiple biological processes as precursors of membrane lipids and lipid mediators. This is Very long chain fatty acid elongase 6 from Rattus norvegicus (Rat).